Reading from the N-terminus, the 136-residue chain is Peptide methionine sulfoxide reductase B5 (136 aa).

The region spanning 14 to 135 (DEEWRAVLSP…NSVSIKFTPA (122 aa)) is the MsrB domain. Zn(2+) contacts are provided by Cys53, Cys56, Cys99, and Cys102. A disulfide bridge connects residues Cys71 and Cys124. Catalysis depends on Cys124, which acts as the Nucleophile.

It belongs to the MsrB Met sulfoxide reductase family. Zn(2+) is required as a cofactor.

The protein resides in the cytoplasm. It localises to the cytosol. The catalysed reaction is L-methionyl-[protein] + [thioredoxin]-disulfide + H2O = L-methionyl-(R)-S-oxide-[protein] + [thioredoxin]-dithiol. Its function is as follows. Catalyzes the reduction of methionine sulfoxide (MetSO) to methionine in proteins. Plays a protective role against oxidative stress by restoring activity to proteins that have been inactivated by methionine oxidation. MSRB family specifically reduces the MetSO R-enantiomer. The chain is Peptide methionine sulfoxide reductase B5 (MSRB5) from Oryza sativa subsp. japonica (Rice).